The following is a 276-amino-acid chain: Diaminopimelate epimerase (276 aa).

Substrate-binding residues include Asn-13, Gln-46, and Asn-66. Residue Cys-75 is the Proton donor of the active site. Substrate-binding positions include Gly-76–Asn-77, Asn-159, Asn-192, and Glu-210–Arg-211. The Proton acceptor role is filled by Cys-219. Residue Gly-220 to Thr-221 participates in substrate binding.

Belongs to the diaminopimelate epimerase family. As to quaternary structure, homodimer.

The protein resides in the cytoplasm. The catalysed reaction is (2S,6S)-2,6-diaminopimelate = meso-2,6-diaminopimelate. The protein operates within amino-acid biosynthesis; L-lysine biosynthesis via DAP pathway; DL-2,6-diaminopimelate from LL-2,6-diaminopimelate: step 1/1. Functionally, catalyzes the stereoinversion of LL-2,6-diaminopimelate (L,L-DAP) to meso-diaminopimelate (meso-DAP), a precursor of L-lysine and an essential component of the bacterial peptidoglycan. This Pseudomonas aeruginosa (strain LESB58) protein is Diaminopimelate epimerase.